Consider the following 147-residue polypeptide: Cytochrome c' (147 aa).

An N-terminal signal peptide occupies residues 1 to 21 (MKRMMIVAALAALTTTTVAQA). Residues Arg31, Thr87, Glu88, Cys137, Cys140, and His141 each coordinate heme c.

In terms of assembly, homodimer. In terms of processing, binds 1 heme c group covalently per subunit.

Its function is as follows. Cytochrome c' is the most widely occurring bacterial c-type cytochrome. Cytochromes c' are high-spin proteins and the heme has no sixth ligand. Their exact function is not known. The polypeptide is Cytochrome c' (Rhodospirillum rubrum (strain ATCC 11170 / ATH 1.1.1 / DSM 467 / LMG 4362 / NCIMB 8255 / S1)).